An 83-amino-acid chain; its full sequence is Non-muscle caldesmon (83 aa).

2 stretches are compositionally biased toward basic and acidic residues: residues 1–44 (QTSE…KEEK) and 62–76 (NQLKDEKTKKDKESK). Residues 1 to 63 (QTSEKEGRSE…PKPGSIEENQ (63 aa)) form a myosin and calmodulin-binding region. Residues 1–83 (QTSEKEGRSE…ESKNILSLCL (83 aa)) form a disordered region.

In non-muscle cells, phosphorylation by CDC2 during mitosis causes caldesmon to dissociate from microfilaments. Phosphorylation reduces caldesmon binding to actin, myosin, and calmodulin as well as its inhibition of actomyosin ATPase activity. Phosphorylation also occurs in both quiescent and dividing smooth muscle cells with similar effects on the interaction with actin and calmodulin and on microfilaments reorganization.

Its subcellular location is the cytoplasm. The protein localises to the cytoskeleton. It localises to the myofibril. It is found in the stress fiber. Actin- and myosin-binding protein implicated in the regulation of actomyosin interactions in smooth muscle and nonmuscle cells (could act as a bridge between myosin and actin filaments). Stimulates actin binding of tropomyosin which increases the stabilization of actin filament structure. In muscle tissues, inhibits the actomyosin ATPase by binding to F-actin. This inhibition is attenuated by calcium-calmodulin and is potentiated by tropomyosin. Interacts with actin, myosin, two molecules of tropomyosin and with calmodulin. Also plays an essential role during cellular mitosis and receptor capping. This is Non-muscle caldesmon (CALD1) from Bos taurus (Bovine).